Reading from the N-terminus, the 489-residue chain is Beta-glucosidase 14 (489 aa).

The signal sequence occupies residues 1 to 21 (MTSKYFSVLVFIILASNEVVA). Q49 lines the a beta-D-glucoside pocket. The N-linked (GlcNAc...) asparagine glycan is linked to N80. Residues H153 and 198-199 (NE) each bind a beta-D-glucoside. Residue E199 is the Proton donor of the active site. A disulfide bridge connects residues C218 and C226. N225 carries N-linked (GlcNAc...) asparagine glycosylation. Y343 is an a beta-D-glucoside binding site. Residue N357 is glycosylated (N-linked (GlcNAc...) asparagine). A beta-D-glucoside is bound by residues E396, W441, 448-449 (EW), and F457. Residue E396 is the Nucleophile of the active site.

It belongs to the glycosyl hydrolase 1 family.

The enzyme catalyses Hydrolysis of terminal, non-reducing beta-D-glucosyl residues with release of beta-D-glucose.. This chain is Beta-glucosidase 14, found in Arabidopsis thaliana (Mouse-ear cress).